Here is a 160-residue protein sequence, read N- to C-terminus: Phosphoribosyl-ATP pyrophosphatase (160 aa).

It belongs to the PRA-PH family.

The protein resides in the cytoplasm. It carries out the reaction 1-(5-phospho-beta-D-ribosyl)-ATP + H2O = 1-(5-phospho-beta-D-ribosyl)-5'-AMP + diphosphate + H(+). The protein operates within amino-acid biosynthesis; L-histidine biosynthesis; L-histidine from 5-phospho-alpha-D-ribose 1-diphosphate: step 2/9. This Granulibacter bethesdensis (strain ATCC BAA-1260 / CGDNIH1) protein is Phosphoribosyl-ATP pyrophosphatase.